The primary structure comprises 302 residues: tRNA pseudouridine synthase B (302 aa).

Asp43 functions as the Nucleophile in the catalytic mechanism.

Belongs to the pseudouridine synthase TruB family. Type 1 subfamily.

The catalysed reaction is uridine(55) in tRNA = pseudouridine(55) in tRNA. Its function is as follows. Responsible for synthesis of pseudouridine from uracil-55 in the psi GC loop of transfer RNAs. This is tRNA pseudouridine synthase B from Burkholderia mallei (strain NCTC 10247).